The primary structure comprises 485 residues: Probable glycine dehydrogenase (decarboxylating) subunit 2 (485 aa).

Lys269 bears the N6-(pyridoxal phosphate)lysine mark.

It belongs to the GcvP family. C-terminal subunit subfamily. As to quaternary structure, the glycine cleavage system is composed of four proteins: P, T, L and H. In this organism, the P 'protein' is a heterodimer of two subunits. Pyridoxal 5'-phosphate serves as cofactor.

The catalysed reaction is N(6)-[(R)-lipoyl]-L-lysyl-[glycine-cleavage complex H protein] + glycine + H(+) = N(6)-[(R)-S(8)-aminomethyldihydrolipoyl]-L-lysyl-[glycine-cleavage complex H protein] + CO2. The glycine cleavage system catalyzes the degradation of glycine. The P protein binds the alpha-amino group of glycine through its pyridoxal phosphate cofactor; CO(2) is released and the remaining methylamine moiety is then transferred to the lipoamide cofactor of the H protein. In Chlorobium phaeovibrioides (strain DSM 265 / 1930) (Prosthecochloris vibrioformis (strain DSM 265)), this protein is Probable glycine dehydrogenase (decarboxylating) subunit 2.